Here is a 162-residue protein sequence, read N- to C-terminus: MHNMFPALTKTLSLQGYKIINSQTGSAAWSCGRRWFSSDKDDHDDVVTRIKIAPIKRTNEPLDKKRARLIYQSRKRGILETDLLLSGFAAKYLKKMNEEELEEYDSLLNELDWDIYYWATKNFKTSPLPDKWANSKLLKQLQEFSENKEKEILSMPDLSKYQ.

Residues 1–35 (MHNMFPALTKTLSLQGYKIINSQTGSAAWSCGRRW) constitute a mitochondrion transit peptide.

The protein belongs to the SDHAF2 family. In terms of assembly, interacts with SDH1 within the SDH catalytic dimer.

It localises to the mitochondrion matrix. Functionally, plays an essential role in the assembly of succinate dehydrogenase (SDH), an enzyme complex (also referred to as respiratory complex II) that is a component of both the tricarboxylic acid (TCA) cycle and the mitochondrial electron transport chain, and which couples the oxidation of succinate to fumarate with the reduction of ubiquinone (coenzyme Q) to ubiquinol. Required for flavinylation (covalent attachment of FAD) of the flavoprotein subunit SDH1 of the SDH catalytic dimer. It is unclear whether it participates in the chemistry of FAD attachment (enzymatic function) or acts as a chaperone that maintains SDH1 in a conformation that is susceptible to autocatalytic FAD attachment. Does not bind FAD or FADH(2) in vitro. Involved in sporulation. Required for the full activation of the early meiotic inducer IME1. This chain is Succinate dehydrogenase assembly factor 2, mitochondrial, found in Saccharomyces cerevisiae (strain ATCC 204508 / S288c) (Baker's yeast).